The following is a 196-amino-acid chain: Molybdopterin synthase catalytic subunit (196 aa).

A disordered region spans residues methionine 1–serine 29. Substrate-binding positions include histidine 145 to arginine 146, lysine 161, and lysine 168 to glutamate 170. Residues glycine 174 to serine 196 are disordered. The segment covering arginine 183–serine 196 has biased composition (basic and acidic residues).

This sequence belongs to the MoaE family. MOCS2B subfamily. As to quaternary structure, heterotetramer; composed of 2 small (MOCS2A) and 2 large (MOCS2B) subunits.

Its subcellular location is the cytoplasm. The enzyme catalyses 2 [molybdopterin-synthase sulfur-carrier protein]-C-terminal-Gly-aminoethanethioate + cyclic pyranopterin phosphate + H2O = molybdopterin + 2 [molybdopterin-synthase sulfur-carrier protein]-C-terminal Gly-Gly + 2 H(+). Its pathway is cofactor biosynthesis; molybdopterin biosynthesis. In terms of biological role, catalytic subunit of the molybdopterin synthase complex, a complex that catalyzes the conversion of precursor Z into molybdopterin. Acts by mediating the incorporation of 2 sulfur atoms from thiocarboxylated MOCS2A into precursor Z to generate a dithiolene group. This chain is Molybdopterin synthase catalytic subunit, found in Coccidioides immitis (strain RS) (Valley fever fungus).